Here is a 317-residue protein sequence, read N- to C-terminus: Transaldolase (317 aa).

K132 serves as the catalytic Schiff-base intermediate with substrate.

This sequence belongs to the transaldolase family. Type 1 subfamily. Homodimer.

The protein resides in the cytoplasm. The catalysed reaction is D-sedoheptulose 7-phosphate + D-glyceraldehyde 3-phosphate = D-erythrose 4-phosphate + beta-D-fructose 6-phosphate. Its pathway is carbohydrate degradation; pentose phosphate pathway; D-glyceraldehyde 3-phosphate and beta-D-fructose 6-phosphate from D-ribose 5-phosphate and D-xylulose 5-phosphate (non-oxidative stage): step 2/3. Functionally, transaldolase is important for the balance of metabolites in the pentose-phosphate pathway. This chain is Transaldolase, found in Yersinia pseudotuberculosis serotype IB (strain PB1/+).